A 584-amino-acid chain; its full sequence is 2-succinyl-5-enolpyruvyl-6-hydroxy-3-cyclohexene-1-carboxylate synthase (584 aa).

This sequence belongs to the TPP enzyme family. MenD subfamily. As to quaternary structure, homodimer. It depends on Mg(2+) as a cofactor. Requires Mn(2+) as cofactor. The cofactor is thiamine diphosphate.

The catalysed reaction is isochorismate + 2-oxoglutarate + H(+) = 5-enolpyruvoyl-6-hydroxy-2-succinyl-cyclohex-3-ene-1-carboxylate + CO2. The protein operates within quinol/quinone metabolism; 1,4-dihydroxy-2-naphthoate biosynthesis; 1,4-dihydroxy-2-naphthoate from chorismate: step 2/7. It participates in quinol/quinone metabolism; menaquinone biosynthesis. Functionally, catalyzes the thiamine diphosphate-dependent decarboxylation of 2-oxoglutarate and the subsequent addition of the resulting succinic semialdehyde-thiamine pyrophosphate anion to isochorismate to yield 2-succinyl-5-enolpyruvyl-6-hydroxy-3-cyclohexene-1-carboxylate (SEPHCHC). This is 2-succinyl-5-enolpyruvyl-6-hydroxy-3-cyclohexene-1-carboxylate synthase from Bacillus cytotoxicus (strain DSM 22905 / CIP 110041 / 391-98 / NVH 391-98).